The sequence spans 192 residues: MVAKQESVVAPQVDVSKWSGKELELGKKVNEYAKSLATFKYPFFIPPPYPPAKPNMALSTQVNKMKQTANEAFKRKKYEEAKKLYGLALQLALNRCTWEPSILTREEASVMLCNRAAAEIALSQFPEALADANAALKIRNNYGKCYYRKAKALEAMHRIEEAKQVVRDGLILAEPVTRNELVALWASYTEKD.

In terms of assembly, component of the heterotetrameric Sec62/63complex composed of sec62, sec63, sec66 and sec72. The Sec62/63 complex associates with the Sec61 complex to form the Sec complex.

The protein localises to the cytoplasm. It is found in the nucleus. In terms of biological role, acts as a non-essential component of the Sec62/63 complex which is involved in SRP-independent post-translational translocation across the endoplasmic reticulum (ER) and functions together with the Sec61 complex and bip1 in a channel-forming translocon complex. A cycle of assembly and disassembly of Sec62/63 complex from sec61 may govern the activity of the translocon. sec72 may be involved in signal peptide recognition for a defined subset of leader peptides, or may increase the efficiency of unusual or 'difficult' secretory precursors to the translocation pore, it may be that this protein binds charged leader peptides to the membrane until they engage the translocation apparatus. The protein is ER protein translocation subcomplex subunit sec67 (sec67) of Schizosaccharomyces pombe (strain 972 / ATCC 24843) (Fission yeast).